The following is a 466-amino-acid chain: ATP synthase subunit beta (466 aa).

ATP is bound at residue 152 to 159 (GGAGVGKT).

This sequence belongs to the ATPase alpha/beta chains family. As to quaternary structure, F-type ATPases have 2 components, CF(1) - the catalytic core - and CF(0) - the membrane proton channel. CF(1) has five subunits: alpha(3), beta(3), gamma(1), delta(1), epsilon(1). CF(0) has three main subunits: a(1), b(2) and c(9-12). The alpha and beta chains form an alternating ring which encloses part of the gamma chain. CF(1) is attached to CF(0) by a central stalk formed by the gamma and epsilon chains, while a peripheral stalk is formed by the delta and b chains.

It is found in the cell inner membrane. The enzyme catalyses ATP + H2O + 4 H(+)(in) = ADP + phosphate + 5 H(+)(out). Functionally, produces ATP from ADP in the presence of a proton gradient across the membrane. The catalytic sites are hosted primarily by the beta subunits. This chain is ATP synthase subunit beta, found in Sulfurovum sp. (strain NBC37-1).